The following is a 451-amino-acid chain: Tubulin alpha chain (451 aa).

Positions 1–4 (MREC) match the MREC motif motif. A GTP-binding site is contributed by Q11. Position 40 is an N6-acetyllysine (K40). 7 residues coordinate GTP: E71, S140, G144, T145, T179, N206, and N228. E71 provides a ligand contact to Mg(2+). Residue E254 is part of the active site. The disordered stretch occupies residues 432–451 (YEEVGVDSVEGEGEEEGEEY). E445 is modified (5-glutamyl polyglutamate).

It belongs to the tubulin family. Dimer of alpha and beta chains. A typical microtubule is a hollow water-filled tube with an outer diameter of 25 nm and an inner diameter of 15 nM. Alpha-beta heterodimers associate head-to-tail to form protofilaments running lengthwise along the microtubule wall with the beta-tubulin subunit facing the microtubule plus end conferring a structural polarity. Microtubules usually have 13 protofilaments but different protofilament numbers can be found in some organisms and specialized cells. The cofactor is Mg(2+). Some glutamate residues at the C-terminus are polyglycylated, resulting in polyglycine chains on the gamma-carboxyl group. Glycylation is mainly limited to tubulin incorporated into axonemes (cilia and flagella) whereas glutamylation is prevalent in neuronal cells, centrioles, axonemes, and the mitotic spindle. Both modifications can coexist on the same protein on adjacent residues, and lowering polyglycylation levels increases polyglutamylation, and reciprocally. The precise function of polyglycylation is still unclear. Post-translationally, some glutamate residues at the C-terminus are polyglutamylated, resulting in polyglutamate chains on the gamma-carboxyl group. Polyglutamylation plays a key role in microtubule severing by spastin (SPAST). SPAST preferentially recognizes and acts on microtubules decorated with short polyglutamate tails: severing activity by SPAST increases as the number of glutamates per tubulin rises from one to eight, but decreases beyond this glutamylation threshold. In terms of processing, acetylation of alpha chains at Lys-40 is located inside the microtubule lumen. This modification has been correlated with increased microtubule stability, intracellular transport and ciliary assembly. Undergoes a tyrosination/detyrosination cycle, the cyclic removal and re-addition of a C-terminal tyrosine residue by the enzymes tubulin tyrosine carboxypeptidase (MATCAP, VASH1 or VASH2) and tubulin tyrosine ligase (TTL), respectively. Post-translationally, tyrosination promotes microtubule interaction with CAP-Gly microtubule plus-end tracking proteins. Tyrosinated tubulins regulate the initiation of dynein-driven motility. In terms of processing, detyrosination is involved in metaphase plate congression by guiding chromosomes during mitosis. Detyrosination increases microtubules-dependent mechanotransduction in dystrophic cardiac and skeletal muscle. In cardiomyocytes, detyrosinated microtubules are required to resist to contractile compression during contraction.

The protein resides in the cytoplasm. It localises to the cytoskeleton. It catalyses the reaction GTP + H2O = GDP + phosphate + H(+). Tubulin is the major constituent of microtubules, a cylinder consisting of laterally associated linear protofilaments composed of alpha- and beta-tubulin heterodimers. Microtubules grow by the addition of GTP-tubulin dimers to the microtubule end, where a stabilizing cap forms. Below the cap, tubulin dimers are in GDP-bound state, owing to GTPase activity of alpha-tubulin. The chain is Tubulin alpha chain from Torpedo marmorata (Marbled electric ray).